The sequence spans 502 residues: Mannitol 2-dehydrogenase (502 aa).

NAD(+) is bound at residue 37–48 (IVHVGVGGFHRA).

The protein belongs to the mannitol dehydrogenase family. Monomer.

It carries out the reaction D-mannitol + NAD(+) = D-fructose + NADH + H(+). Catalyzes the NAD(H)-dependent interconversion of D-fructose and D-mannitol in the mannitol metabolic pathway. This Aspergillus oryzae (strain ATCC 42149 / RIB 40) (Yellow koji mold) protein is Mannitol 2-dehydrogenase.